A 32-amino-acid polypeptide reads, in one-letter code: Phallacidin proprotein (32 aa).

Positions methionine 1–proline 10 are excised as a propeptide. Positions alanine 11–proline 17 form a cross-link, cyclopeptide (Ala-Pro). Residues tryptophan 12–cysteine 16 constitute a cross-link (2'-cysteinyl-6'-hydroxytryptophan sulfoxide (Trp-Cys)). Residues cysteine 18–lysine 32 constitute a propeptide that is removed on maturation.

This sequence belongs to the MSDIN fungal toxin family. Processed by the macrocyclase-peptidase enzyme POPB to yield a toxic cyclic heptapeptide. POPB first removes 10 residues from the N-terminus. Conformational trapping of the remaining peptide forces the enzyme to release this intermediate rather than proceed to macrocyclization. The enzyme rebinds the remaining peptide in a different conformation and catalyzes macrocyclization of the N-terminal 7 residues.

Functionally, major toxin that belongs to the bicyclic heptapeptides called phallotoxins. Although structurally related to amatoxins, phallotoxins have a different mode of action, which is the stabilization of F-actin. Phallotoxins are poisonous when administered parenterally, but not orally because of poor absorption. The protein is Phallacidin proprotein of Amanita pallidorosea.